A 76-amino-acid polypeptide reads, in one-letter code: uncharacterized protein (76 aa).

3 consecutive transmembrane segments (helical) span residues 2 to 22, 28 to 48, and 56 to 76; these read LKVA…YSLF, LLIV…VEAI, and EYLL…KFII.

It localises to the cell membrane. This is an uncharacterized protein from Bacillus subtilis (strain 168).